Here is a 72-residue protein sequence, read N- to C-terminus: Probable protein E5B (72 aa).

This chain is Probable protein E5B, found in Homo sapiens (Human).